A 311-amino-acid polypeptide reads, in one-letter code: GTPase Era (311 aa).

The Era-type G domain occupies 18–185; it reads RSGFVALIGA…AKYLAESVPN (168 aa). Residues 26–33 form a G1 region; that stretch reads GAPNAGKS. 26–33 lines the GTP pocket; sequence GAPNAGKS. The interval 52-56 is G2; it reads QTTRA. Residues 73 to 76 are G3; it reads DTPG. Residues 73–77 and 135–138 each bind GTP; these read DTPGI and NKVD. A G4 region spans residues 135-138; that stretch reads NKVD. Positions 164–166 are G5; sequence ISA. The region spanning 216 to 293 is the KH type-2 domain; it reads LHEELPYAST…HLFLFVKVRE (78 aa).

The protein belongs to the TRAFAC class TrmE-Era-EngA-EngB-Septin-like GTPase superfamily. Era GTPase family. Monomer.

The protein localises to the cytoplasm. It localises to the cell inner membrane. Functionally, an essential GTPase that binds both GDP and GTP, with rapid nucleotide exchange. Plays a role in 16S rRNA processing and 30S ribosomal subunit biogenesis and possibly also in cell cycle regulation and energy metabolism. The polypeptide is GTPase Era (Brucella suis biovar 1 (strain 1330)).